The primary structure comprises 1614 residues: Adenylate cyclase type 10 (1614 aa).

Guanylate cyclase domains are found at residues 42–179 (VLMF…RLAQ) and 293–418 (TIVF…ARMM). Residues aspartate 47 and isoleucine 48 each contribute to the Mg(2+) site. 47–52 (DISGFT) lines the ATP pocket. Residue lysine 95 participates in hydrogencarbonate binding. Aspartate 99 contributes to the Mg(2+) binding site. Positions 99 and 144 each coordinate ATP. Hydrogencarbonate is bound by residues valine 167, arginine 176, and methionine 337. Residues valine 406 and 412 to 416 (NIAAR) contribute to the ATP site.

This sequence belongs to the adenylyl cyclase class-4/guanylyl cyclase family. Requires Mg(2+) as cofactor. It depends on Mn(2+) as a cofactor. In terms of tissue distribution, expressed in testis.

It is found in the cell membrane. The protein resides in the cytoplasm. The protein localises to the cytoskeleton. It localises to the perinuclear region. Its subcellular location is the nucleus. It is found in the cell projection. The protein resides in the cilium. The protein localises to the mitochondrion. The catalysed reaction is ATP = 3',5'-cyclic AMP + diphosphate. With respect to regulation, activated by manganese or magnesium ions. In the presence of magnesium ions, the enzyme is activated by bicarbonate. Calcium mildly increases the enzyme activity, also in the presence of magnesium ions. Catalyzes the formation of the signaling molecule cAMP. May function as sensor that mediates responses to changes in cellular bicarbonate and CO(2) levels. Has a critical role in mammalian spermatogenesis by producing the cAMP which regulates cAMP-responsive nuclear factors indispensable for sperm maturation in the epididymis. Induces capacitation, the maturational process that sperm undergo prior to fertilization. Involved in ciliary beat regulation. The polypeptide is Adenylate cyclase type 10 (Adcy10) (Mus musculus (Mouse)).